The primary structure comprises 516 residues: Probable 2-methylcitrate dehydratase (516 aa).

This sequence belongs to the PrpD family.

The catalysed reaction is (2S,3S)-2-methylcitrate = 2-methyl-cis-aconitate + H2O. Its pathway is organic acid metabolism; propanoate degradation. Its function is as follows. Catalyzes the stereospecific dehydration of (2S,3S)-2-methylcitrate (2-MC) to yield the cis isomer of 2-methyl-aconitate. This is Probable 2-methylcitrate dehydratase (PDH1) from Saccharomyces cerevisiae (strain ATCC 204508 / S288c) (Baker's yeast).